A 261-amino-acid chain; its full sequence is Transmembrane and immunoglobulin domain-containing protein 1 (261 aa).

A signal peptide spans 1 to 27 (MAQKTSGLIQRCRFLLLMILFLPHVMT). The 87-residue stretch at 28 to 114 (SSVLSVNGKT…LQRNQSVSIS (87 aa)) folds into the Ig-like C2-type 1 domain. The Extracellular portion of the chain corresponds to 28 to 219 (SSVLSVNGKT…IVKDKGSTVP (192 aa)). A disulfide bridge links Cys54 with Cys103. 4 N-linked (GlcNAc...) asparagine glycosylation sites follow: Asn83, Asn108, Asn118, and Asn189. In terms of domain architecture, Ig-like C2-type 2 spans 122 to 208 (PPLLSGNDFQ…LIETKTKDFH (87 aa)). A disulfide bridge connects residues Cys143 and Cys194. The helical transmembrane segment at 220–240 (IEPIIAACVVVFLTLVFGVIA) threads the bilayer. The Cytoplasmic segment spans residues 241–261 (RRKRIMKLCRKDQGPQCRTAL).

In terms of assembly, homodimer. In terms of processing, N-glycosylated.

The protein resides in the cell membrane. It localises to the cytoplasm. Its function is as follows. May control cell-cell adhesion, cell migration and proliferation, cell morphology, and protects renal epithelial cells from oxidative cell injury to promote cell survival. The sequence is that of Transmembrane and immunoglobulin domain-containing protein 1 from Bos taurus (Bovine).